A 178-amino-acid chain; its full sequence is Photosystem I assembly protein Ycf4 (178 aa).

Transmembrane regions (helical) follow at residues isoleucine 19–serine 39 and leucine 61–isoleucine 81.

Belongs to the Ycf4 family.

The protein resides in the cellular thylakoid membrane. Functionally, seems to be required for the assembly of the photosystem I complex. In Synechococcus sp. (strain WH7803), this protein is Photosystem I assembly protein Ycf4.